The chain runs to 354 residues: Kelch domain-containing protein 8B (354 aa).

8 Kelch repeats span residues 1 to 31, 32 to 79, 81 to 127, 128 to 175, 176 to 222, 224 to 281, 282 to 329, and 331 to 354; these read MSAGGGRAFAWQVFPPMPTCRVYGTVAHQDG, HLLV…VLGK, VLVV…ERDG, MVYA…LHGN, KIYV…MAEG, VFSL…SLGG, HIVA…QAGP, and LFVIGGVAQGPSQAVEALCLRDGV.

It localises to the cytoplasm. The protein resides in the midbody. Functionally, involved in pinching off the separated nuclei at the cleavage furrow and in cytokinesis. Required for mitotic integrity and maintenance of chromosomal stability. Protects cells against mitotic errors, centrosomal amplification, micronucleus formation and aneuploidy. Plays a key role of midbody function involving abscission of the daughter cells during cytokinesis and appropriate chromosomal and nuclear segregation into the daughter cells. The protein is Kelch domain-containing protein 8B of Homo sapiens (Human).